Reading from the N-terminus, the 395-residue chain is Nicotinamide/nicotinic acid mononucleotide adenylyltransferase 2 (395 aa).

2 disordered regions span residues 1–34 and 62–102; these read MDPT…SGPI and KKNA…NGID. Pro residues predominate over residues 9–24; the sequence is FKPPQPNEELQPPPDP. Residues serine 85, serine 89, and serine 90 each carry the phosphoserine modification. Serine 167 and phenylalanine 168 together coordinate NAD(+). ATP-binding residues include histidine 175 and arginine 209. 6 residues coordinate NAD(+): threonine 247, glycine 282, aspartate 284, tryptophan 295, arginine 314, and asparagine 345. 350-353 is an ATP binding site; the sequence is TKVR.

Belongs to the eukaryotic NMN adenylyltransferase family. It depends on Co(2+) as a cofactor.

It localises to the nucleus. The enzyme catalyses beta-nicotinamide D-ribonucleotide + ATP + H(+) = diphosphate + NAD(+). It carries out the reaction nicotinate beta-D-ribonucleotide + ATP + H(+) = deamido-NAD(+) + diphosphate. It participates in cofactor biosynthesis; NAD(+) biosynthesis; deamido-NAD(+) from nicotinate D-ribonucleotide: step 1/1. It functions in the pathway cofactor biosynthesis; NAD(+) biosynthesis; NAD(+) from nicotinamide D-ribonucleotide: step 1/1. Its function is as follows. Catalyzes the formation of NAD(+) from nicotinamide mononucleotide (NMN) and ATP. Can also use the deamidated form; nicotinic acid mononucleotide (NaMN) as substrate to form deamido-NAD(+) (NaAD). Key enzyme in both de novo and salvage pathways for NAD(+) biosynthesis. Predominantly acts in the salvage pathways via NMN. The protein is Nicotinamide/nicotinic acid mononucleotide adenylyltransferase 2 of Saccharomyces cerevisiae (strain ATCC 204508 / S288c) (Baker's yeast).